A 239-amino-acid polypeptide reads, in one-letter code: Ribonuclease P protein component 3 (239 aa).

The protein belongs to the eukaryotic/archaeal RNase P protein component 3 family. Consists of a catalytic RNA component and at least 4-5 protein subunits.

Its subcellular location is the cytoplasm. The catalysed reaction is Endonucleolytic cleavage of RNA, removing 5'-extranucleotides from tRNA precursor.. Its function is as follows. Part of ribonuclease P, a protein complex that generates mature tRNA molecules by cleaving their 5'-ends. This chain is Ribonuclease P protein component 3, found in Methanosarcina acetivorans (strain ATCC 35395 / DSM 2834 / JCM 12185 / C2A).